The chain runs to 454 residues: tRNA modification GTPase MnmE (454 aa).

Residues Arg-23, Glu-80, and Lys-120 each contribute to the (6S)-5-formyl-5,6,7,8-tetrahydrofolate site. Residues 216–377 enclose the TrmE-type G domain; sequence GMKVVIAGRP…LRNHLKQSMG (162 aa). Asn-226 contacts K(+). GTP is bound by residues 226 to 231, 245 to 251, 270 to 273, 335 to 338, and 358 to 360; these read NAGKSS, TDIAGTT, DTAG, NKAD, and SAR. Ser-230 is a Mg(2+) binding site. K(+) is bound by residues Thr-245, Ile-247, and Thr-250. Thr-251 is a binding site for Mg(2+). Lys-454 contributes to the (6S)-5-formyl-5,6,7,8-tetrahydrofolate binding site.

Belongs to the TRAFAC class TrmE-Era-EngA-EngB-Septin-like GTPase superfamily. TrmE GTPase family. Homodimer. Heterotetramer of two MnmE and two MnmG subunits. K(+) is required as a cofactor.

It is found in the cytoplasm. Exhibits a very high intrinsic GTPase hydrolysis rate. Involved in the addition of a carboxymethylaminomethyl (cmnm) group at the wobble position (U34) of certain tRNAs, forming tRNA-cmnm(5)s(2)U34. In Salmonella typhi, this protein is tRNA modification GTPase MnmE.